The chain runs to 256 residues: Ubiquinone/menaquinone biosynthesis C-methyltransferase UbiE (256 aa).

Residues T79, D100, and 128–129 (DA) each bind S-adenosyl-L-methionine.

This sequence belongs to the class I-like SAM-binding methyltransferase superfamily. MenG/UbiE family.

It catalyses the reaction a 2-demethylmenaquinol + S-adenosyl-L-methionine = a menaquinol + S-adenosyl-L-homocysteine + H(+). It carries out the reaction a 2-methoxy-6-(all-trans-polyprenyl)benzene-1,4-diol + S-adenosyl-L-methionine = a 5-methoxy-2-methyl-3-(all-trans-polyprenyl)benzene-1,4-diol + S-adenosyl-L-homocysteine + H(+). Its pathway is quinol/quinone metabolism; menaquinone biosynthesis; menaquinol from 1,4-dihydroxy-2-naphthoate: step 2/2. It participates in cofactor biosynthesis; ubiquinone biosynthesis. In terms of biological role, methyltransferase required for the conversion of demethylmenaquinol (DMKH2) to menaquinol (MKH2) and the conversion of 2-polyprenyl-6-methoxy-1,4-benzoquinol (DDMQH2) to 2-polyprenyl-3-methyl-6-methoxy-1,4-benzoquinol (DMQH2). The chain is Ubiquinone/menaquinone biosynthesis C-methyltransferase UbiE from Pseudomonas paraeruginosa (strain DSM 24068 / PA7) (Pseudomonas aeruginosa (strain PA7)).